Consider the following 304-residue polypeptide: Acetyl-coenzyme A carboxylase carboxyl transferase subunit beta (304 aa).

One can recognise a CoA carboxyltransferase N-terminal domain in the interval 23-292 (VWTKCDSCGQ…PNPDAPREGV (270 aa)). Positions 27, 30, 46, and 49 each coordinate Zn(2+). The C4-type zinc finger occupies 27-49 (CDSCGQVLYRAELERNLEVCPKC). Residues 284–304 (NPDAPREGVVVPPAPGQESEA) are disordered.

The protein belongs to the AccD/PCCB family. Acetyl-CoA carboxylase is a heterohexamer composed of biotin carboxyl carrier protein (AccB), biotin carboxylase (AccC) and two subunits each of ACCase subunit alpha (AccA) and ACCase subunit beta (AccD). Zn(2+) serves as cofactor.

The protein resides in the cytoplasm. It catalyses the reaction N(6)-carboxybiotinyl-L-lysyl-[protein] + acetyl-CoA = N(6)-biotinyl-L-lysyl-[protein] + malonyl-CoA. It functions in the pathway lipid metabolism; malonyl-CoA biosynthesis; malonyl-CoA from acetyl-CoA: step 1/1. In terms of biological role, component of the acetyl coenzyme A carboxylase (ACC) complex. Biotin carboxylase (BC) catalyzes the carboxylation of biotin on its carrier protein (BCCP) and then the CO(2) group is transferred by the transcarboxylase to acetyl-CoA to form malonyl-CoA. The chain is Acetyl-coenzyme A carboxylase carboxyl transferase subunit beta from Salmonella arizonae (strain ATCC BAA-731 / CDC346-86 / RSK2980).